We begin with the raw amino-acid sequence, 413 residues long: Clusterin-associated protein 1 (413 aa).

The stretch at methionine 185–serine 308 forms a coiled coil. The interval lysine 303–phenylalanine 413 is disordered. Acidic residues-rich tracts occupy residues aspartate 312–leucine 328 and aspartate 360–serine 388. Serine 314, serine 324, and serine 326 each carry phosphoserine. Serine 409 is modified (phosphoserine).

The protein belongs to the CLUAP1 family. Interacts with CLU/clusterin. Interacts with UBXN10; the interaction is direct. Expressed in all tissues tested including heart, kidney, skeletal muscle, eye, liver, ovary, oviduct, testes, lung and brain. Elevated levels in multiciliated cells such as the bronchioles of the lungs, ependymal cells of the brain and cells with a single primary cilia of heart and kidney.

It is found in the cell projection. Its subcellular location is the cilium. The protein localises to the nucleus. Required for cilia biogenesis. Appears to function within the multiple intraflagellar transport complex B (IFT-B). Key regulator of hedgehog signaling. This Mus musculus (Mouse) protein is Clusterin-associated protein 1 (Cluap1).